A 289-amino-acid chain; its full sequence is N-acetylmuramoyl-L-alanine amidase AmiA (289 aa).

The tat-type signal signal peptide spans 1–34 (MSTFKLLKTLTSRRQVLKTGLAALTLSGMSHAVA). A disordered region spans residues 36-61 (EETLKTSNGHSKPKTKKTGSKRLVML). Positions 46 to 55 (SKPKTKKTGS) are enriched in basic residues. The MurNAc-LAA domain maps to 59–273 (VMLDPGHGGI…IATAIANGII (215 aa)).

Belongs to the N-acetylmuramoyl-L-alanine amidase 3 family. In terms of processing, predicted to be exported by the Tat system. The position of the signal peptide cleavage has not been experimentally proven.

The protein localises to the periplasm. The enzyme catalyses Hydrolyzes the link between N-acetylmuramoyl residues and L-amino acid residues in certain cell-wall glycopeptides.. Functionally, cell-wall hydrolase involved in septum cleavage during cell division. The protein is N-acetylmuramoyl-L-alanine amidase AmiA (amiA) of Salmonella typhimurium (strain LT2 / SGSC1412 / ATCC 700720).